The following is a 99-amino-acid chain: Small ribosomal subunit protein eS24 (99 aa).

Belongs to the eukaryotic ribosomal protein eS24 family.

In Methanothrix thermoacetophila (strain DSM 6194 / JCM 14653 / NBRC 101360 / PT) (Methanosaeta thermophila), this protein is Small ribosomal subunit protein eS24.